A 2297-amino-acid chain; its full sequence is Serine/threonine-protein kinase WNK2 (2297 aa).

A compositionally biased stretch (basic and acidic residues) spans 1-10; the sequence is MDGDGGRRDV. 2 disordered regions span residues 1 to 75 and 89 to 183; these read MDGD…QRRV and ARGR…EDDL. Omega-N-methylarginine is present on residues Arg-19 and Arg-30. Ser-45 bears the Phosphoserine mark. The span at 92–120 shows a compositional bias: low complexity; that stretch reads RPAAPAPAALVAQPGAPGAPADAGPEPVG. Over residues 142-172 the composition is skewed to basic and acidic residues; the sequence is GPREEAAATVRKEDEGAAEAKPEPGRTRRDE. Acidic residues predominate over residues 173–182; that stretch reads PEEEEDDEDD. The region spanning 195-453 is the Protein kinase domain; the sequence is LKFDIELGRG…IKDLLSHAFF (259 aa). Residues Ser-205, 275–278, and Lys-325 contribute to the ATP site; that span reads TELM. Asp-342 functions as the Proton acceptor in the catalytic mechanism. Ser-352 and Ser-356 each carry phosphoserine; by autocatalysis. Residue Ser-560 is modified to Phosphoserine. Disordered regions lie at residues 579-630, 699-751, 917-1022, 1117-1185, 1262-1297, 1323-1345, 1374-1480, and 1492-1586; these read AQAG…DSQS, FPDP…PVVP, PQMA…PGSQ, PVQE…ERAS, SEDT…SQAN, APEA…ASQG, SAQS…HEAP, and PCTP…DSTI. The segment covering 604 to 625 has biased composition (polar residues); the sequence is PTSATSLASDSTFDSGQGSTVY. Pro residues-rich tracts occupy residues 709 to 740 and 939 to 1007; these read VLPP…PTPL and PPQP…PLQP. Position 1150 is a phosphoserine (Ser-1150). Basic residues predominate over residues 1167–1178; the sequence is ARKHHRRSTRAR. Residue Ser-1262 is modified to Phosphoserine. The segment covering 1392-1406 has biased composition (polar residues); that stretch reads SKEQPSFLASQQLLS. Residues 1411-1426 show a composition bias toward pro residues; the sequence is SNPPGAPPAPLAPSSP. 2 stretches are compositionally biased toward polar residues: residues 1439–1453 and 1461–1473; these read ATST…TASQ and QGLT…SQPL. The span at 1510–1520 shows a compositional bias: pro residues; that stretch reads EPLPPPAPEPS. The segment covering 1526–1544 has biased composition (low complexity); sequence PQPALGQPAPLLPAAVGAV. The segment covering 1552 to 1565 has biased composition (pro residues); that stretch reads PSPPLGPTVPPQPP. Ser-1588 is modified (phosphoserine). The segment covering 1621–1631 has biased composition (basic and acidic residues); sequence TLEPLRGDQPR. The segment at 1621 to 1865 is disordered; the sequence is TLEPLRGDQP…PVQKQASLPV (245 aa). The segment covering 1675 to 1688 has biased composition (polar residues); sequence QGTSSSMTAESSPR. Ser-1685 carries the phosphoserine modification. Residues 1721-1731 show a composition bias toward basic and acidic residues; that stretch reads ARVEPTDRDGG. Ser-1736, Ser-1817, Ser-1818, Ser-1862, and Ser-1889 each carry phosphoserine. Disordered regions lie at residues 1970-1990 and 2011-2031; these read NVGF…SKSK and TGHL…QASV. The segment covering 1981–1990 has biased composition (basic residues); it reads GRRRKTSKSK. Ser-2067 carries the phosphoserine modification. Disordered stretches follow at residues 2123–2142 and 2269–2297; these read SRSS…QPAL and CCGH…PVRS. Positions 2272-2289 are enriched in polar residues; sequence HSTQPRGGQRVGSKTASF.

Belongs to the protein kinase superfamily. Ser/Thr protein kinase family. WNK subfamily. In terms of assembly, forms a complex with the phosphorylated form of STK39. It depends on Mg(2+) as a cofactor. In terms of processing, autophosphorylated. Autophosphorylation at Ser-352 and Ser-356 promotes its activity. In terms of tissue distribution, expressed in various cancer cell lines (at protein level). Predominantly expressed in heart, brain, skeletal muscle and colon.

The protein localises to the cytoplasm. It localises to the cell membrane. The catalysed reaction is L-seryl-[protein] + ATP = O-phospho-L-seryl-[protein] + ADP + H(+). It carries out the reaction L-threonyl-[protein] + ATP = O-phospho-L-threonyl-[protein] + ADP + H(+). With respect to regulation, activation requires autophosphorylation of Ser-356 and, to a lower extent, Ser-352. In terms of biological role, serine/threonine-protein kinase component of the WNK2-SPAK/OSR1 kinase cascade, which plays an important role in the regulation of electrolyte homeostasis, cell signaling, survival, and proliferation. The WNK2-SPAK/OSR1 kinase cascade is composed of WNK2, which mediates phosphorylation and activation of downstream kinases OXSR1/OSR1 and STK39/SPAK. Following activation, OXSR1/OSR1 and STK39/SPAK catalyze phosphorylation of ion cotransporters, regulating their activity. Acts as an activator and inhibitor of sodium-coupled chloride cotransporters and potassium-coupled chloride cotransporters respectively. Activates SLC12A2, SCNN1A, SCNN1B, SCNN1D and SGK1 and inhibits SLC12A5. Negatively regulates the EGF-induced activation of the ERK/MAPK-pathway and the downstream cell cycle progression. Affects MAPK3/MAPK1 activity by modulating the activity of MAP2K1 and this modulation depends on phosphorylation of MAP2K1 by PAK1. WNK2 acts by interfering with the activity of PAK1 by controlling the balance of the activity of upstream regulators of PAK1 activity, RHOA and RAC1, which display reciprocal activity. This chain is Serine/threonine-protein kinase WNK2, found in Homo sapiens (Human).